The chain runs to 468 residues: Cysteine--tRNA ligase (468 aa).

Residue Cys28 coordinates Zn(2+). The 'HIGH' region signature appears at 30 to 40 (PTVYNYIHIGN). Zn(2+)-binding residues include Cys212, His237, and Glu241. Residues 271 to 275 (KMSKS) carry the 'KMSKS' region motif. Position 274 (Lys274) interacts with ATP.

It belongs to the class-I aminoacyl-tRNA synthetase family. In terms of assembly, monomer. Requires Zn(2+) as cofactor.

It localises to the cytoplasm. The enzyme catalyses tRNA(Cys) + L-cysteine + ATP = L-cysteinyl-tRNA(Cys) + AMP + diphosphate. This is Cysteine--tRNA ligase from Lacticaseibacillus casei (strain BL23) (Lactobacillus casei).